A 778-amino-acid polypeptide reads, in one-letter code: Tastin (778 aa).

Positions 1–11 (MTTRQATKDPL) are enriched in basic and acidic residues. A disordered region spans residues 1-115 (MTTRQATKDP…PGPPAQTEAP (115 aa)). Ser-16, Ser-98, and Ser-170 each carry phosphoserine. The segment at 212 to 244 (ISPSGPSFHPSTRPSFQELRRETAGSSRTSVSQ) is disordered. Residues 235-244 (AGSSRTSVSQ) show a composition bias toward polar residues. Phosphoserine occurs at positions 324, 334, 344, and 362. Position 363 is a phosphothreonine (Thr-363). Ser-376 carries the post-translational modification Phosphoserine. Disordered stretches follow at residues 406-425 (EGSG…NRTP), 508-587 (ECGE…AEPR), and 600-641 (PESS…RVEL). The segment covering 513-523 (QPCPPAEPGPP) has biased composition (pro residues). Repeat copies occupy residues 516 to 548 (PPAE…PEPY), 549 to 581 (PPAE…PEPC), 582 to 614 (PPAE…PEPC), and 615 to 647 (PPAE…SEPC). The tract at residues 516 to 647 (PPAEPGPPEA…RVELGASEPC (132 aa)) is 4 X 33 AA approximate tandem repeats. A compositionally biased stretch (basic and acidic residues) spans 560–574 (CRSEPEIPESSRQEQ). Over residues 612 to 622 (EPCPPAEPGPL) the composition is skewed to pro residues.

As to quaternary structure, directly binds bystin, and indirectly trophinin. Strong expression at implantation sites. Was exclusively localized to the apical side of the syncytiotrophoblast. Also found in macrophages.

It is found in the cytoplasm. Its function is as follows. Could be involved with bystin and trophinin in a cell adhesion molecule complex that mediates an initial attachment of the blastocyst to uterine epithelial cells at the time of the embryo implantation. The polypeptide is Tastin (TROAP) (Homo sapiens (Human)).